A 615-amino-acid polypeptide reads, in one-letter code: MPIQVLPPQLANQIAAGEVVERPASVVKELVENSLDAGATRIDIDIERGGAKLIRIRDNGCGIKKDELALALARHATSKIASLDDLEAIISLGFRGEALASISSVSRLTLTSRTAEQQEAWQAYAEGRDMDVTVKPAAHPVGTTLEVLDLFYNTPARRKFLRTEKTEFNHIDEIIRRIALARFDVTINLSHNGKIVRQYRAVPEGGQKERRLGAICGTAFLEQALAIEWQHCDLTLRGWVADPNHTTPALAEIQYCYVNGRMMRDRLINHAIRQACEDKLGADQQPAFVLYLEIDPHQVDVNVHPAKHEVRFHQSRLVHDFIYQGVLSVLQQQLETPLPLDDEPQPAPRAIPENRVAAGRNHFAEPAVREPVAPRYTPAPASGSRPAAPWPNTQPGYQKQQGEVYRQLLQTPAPMQKPKAPEPQEPALAANSQSFGRVLTIVHSDCALLERDGNISLLALPAAERWLRQAQLTPGEAPVCAQPLLIPLRLKVSGEEKSALEKAQSALAELGIDFQSDAQHVTIRAVPLPLRQQNLQILIPELIGYLAKQSVFEPGNIAQWIARNLMSEHAQWSMAQAITLLADVERLCPQLVKTPPGGLLQSVDLHPAIKALKDE.

A disordered region spans residues 370-397 (EPVAPRYTPAPASGSRPAAPWPNTQPGY). Residues 378 to 391 (PAPASGSRPAAPWP) show a composition bias toward low complexity.

This sequence belongs to the DNA mismatch repair MutL/HexB family.

In terms of biological role, this protein is involved in the repair of mismatches in DNA. It is required for dam-dependent methyl-directed DNA mismatch repair. May act as a 'molecular matchmaker', a protein that promotes the formation of a stable complex between two or more DNA-binding proteins in an ATP-dependent manner without itself being part of a final effector complex. This chain is DNA mismatch repair protein MutL, found in Shigella dysenteriae serotype 1 (strain Sd197).